The primary structure comprises 445 residues: DNA repair protein RadA (445 aa).

Residues 10 to 27 (CSNCANISNKWSGQCFDC) form a C4-type zinc finger. 90-97 (GEPGIGKS) contributes to the ATP binding site. Residues 249 to 253 (KNRFG) carry the RadA KNRFG motif motif. The interval 348 to 445 (EIYLSIAGGL…HLQELKEIIK (98 aa)) is lon-protease-like.

It belongs to the RecA family. RadA subfamily.

DNA-dependent ATPase involved in processing of recombination intermediates, plays a role in repairing DNA breaks. Stimulates the branch migration of RecA-mediated strand transfer reactions, allowing the 3' invading strand to extend heteroduplex DNA faster. Binds ssDNA in the presence of ADP but not other nucleotides, has ATPase activity that is stimulated by ssDNA and various branched DNA structures, but inhibited by SSB. Does not have RecA's homology-searching function. The chain is DNA repair protein RadA from Rickettsia prowazekii (strain Madrid E).